A 441-amino-acid polypeptide reads, in one-letter code: Synaptotagmin-1 (441 aa).

The Vesicular portion of the chain corresponds to 1–69; sequence MVKLDFSSQD…DVVKEKVMQQ (69 aa). The chain crosses the membrane as a helical span at residues 70-96; that stretch reads TGMPEWAFVFLGFVFILLVLACAFCLI. Topologically, residues 97-441 are cytoplasmic; sequence RKLFGKKRHG…EEGDKKDDKK (345 aa). C2 domains are found at residues 159–278 and 292–425; these read KLGR…EEWK and SLGD…AQWH. Residues Asp-190, Asp-196, Asp-248, Phe-249, Asp-250, Ser-253, Lys-254, Asp-256, Asp-323, Asp-329, Asp-383, Asp-385, and Asp-391 each contribute to the Ca(2+) site.

It belongs to the synaptotagmin family. The cofactor is Ca(2+). Localized to regions known to be rich in synapses and appears to be associated with synaptic vesicles. Also found in some non-neuronal secretory structures.

Its subcellular location is the cytoplasmic vesicle. The protein resides in the secretory vesicle. It localises to the synaptic vesicle membrane. The protein localises to the synapse. May have a regulatory role in the membrane interactions during trafficking of synaptic vesicles at the active zone of the synapse. It binds acidic phospholipids with a specificity that requires the presence of both an acidic head group and a diacyl backbone. Involved in necrotic cell death. The sequence is that of Synaptotagmin-1 (snt-1) from Caenorhabditis elegans.